The following is a 113-amino-acid chain: Major basic nuclear protein 1 (113 aa).

Residues 1–20 (MAPKMKAAMKAMKAPAMKGK) form a disordered region.

Its subcellular location is the nucleus. In Crypthecodinium cohnii (Dinoflagellate), this protein is Major basic nuclear protein 1 (HCc1).